Here is a 456-residue protein sequence, read N- to C-terminus: Bifunctional protein GlmU (456 aa).

The pyrophosphorylase stretch occupies residues 1–229 (MTKKALSAVI…VMEVEGANNR (229 aa)). Residues 11–14 (LAAG), Lys-25, Gln-76, 81–82 (GT), 103–105 (YGD), Gly-140, Glu-154, Asn-169, and Asn-227 each bind UDP-N-acetyl-alpha-D-glucosamine. A Mg(2+)-binding site is contributed by Asp-105. A Mg(2+)-binding site is contributed by Asn-227. The segment at 230 to 250 (LQLAALERYFQNKQASKLLLE) is linker. The tract at residues 251-456 (GVMIYDPARF…QGWQRPIKKK (206 aa)) is N-acetyltransferase. UDP-N-acetyl-alpha-D-glucosamine contacts are provided by Arg-333 and Lys-351. His-363 acts as the Proton acceptor in catalysis. UDP-N-acetyl-alpha-D-glucosamine contacts are provided by Tyr-366 and Asn-377. Residues Ala-380, 386 to 387 (NY), Ser-405, Ala-423, and Arg-440 each bind acetyl-CoA.

In the N-terminal section; belongs to the N-acetylglucosamine-1-phosphate uridyltransferase family. This sequence in the C-terminal section; belongs to the transferase hexapeptide repeat family. Homotrimer. Mg(2+) is required as a cofactor.

The protein resides in the cytoplasm. It carries out the reaction alpha-D-glucosamine 1-phosphate + acetyl-CoA = N-acetyl-alpha-D-glucosamine 1-phosphate + CoA + H(+). The catalysed reaction is N-acetyl-alpha-D-glucosamine 1-phosphate + UTP + H(+) = UDP-N-acetyl-alpha-D-glucosamine + diphosphate. It functions in the pathway nucleotide-sugar biosynthesis; UDP-N-acetyl-alpha-D-glucosamine biosynthesis; N-acetyl-alpha-D-glucosamine 1-phosphate from alpha-D-glucosamine 6-phosphate (route II): step 2/2. The protein operates within nucleotide-sugar biosynthesis; UDP-N-acetyl-alpha-D-glucosamine biosynthesis; UDP-N-acetyl-alpha-D-glucosamine from N-acetyl-alpha-D-glucosamine 1-phosphate: step 1/1. Its pathway is bacterial outer membrane biogenesis; LPS lipid A biosynthesis. Catalyzes the last two sequential reactions in the de novo biosynthetic pathway for UDP-N-acetylglucosamine (UDP-GlcNAc). The C-terminal domain catalyzes the transfer of acetyl group from acetyl coenzyme A to glucosamine-1-phosphate (GlcN-1-P) to produce N-acetylglucosamine-1-phosphate (GlcNAc-1-P), which is converted into UDP-GlcNAc by the transfer of uridine 5-monophosphate (from uridine 5-triphosphate), a reaction catalyzed by the N-terminal domain. The polypeptide is Bifunctional protein GlmU (Haemophilus influenzae (strain ATCC 51907 / DSM 11121 / KW20 / Rd)).